The primary structure comprises 1008 residues: Serine/threonine-protein kinase PRP4 homolog (1008 aa).

The segment at 1-103 (MAAAEAPSLR…PAKRTKLDDL (103 aa)) is disordered. Position 2 is an N-acetylalanine (alanine 2). Serine 8, serine 20, serine 23, and serine 32 each carry phosphoserine. 2 stretches are compositionally biased toward basic residues: residues 39-59 (KHSR…KHKH) and 67-81 (RKHK…HKRK). A compositionally biased stretch (basic and acidic residues) spans 82-91 (EVADASDKEG). A phosphoserine mark is found at serine 87 and serine 93. Lysine 99 is modified (N6-acetyllysine; alternate). A Glycyl lysine isopeptide (Lys-Gly) (interchain with G-Cter in SUMO2); alternate cross-link involves residue lysine 99. Lysine 111 participates in a covalent cross-link: Glycyl lysine isopeptide (Lys-Gly) (interchain with G-Cter in SUMO2). Residue lysine 117 forms a Glycyl lysine isopeptide (Lys-Gly) (interchain with G-Cter in SUMO2); alternate linkage. Residue lysine 117 forms a Glycyl lysine isopeptide (Lys-Gly) (interchain with G-Cter in SUMO1); alternate linkage. A Phosphoserine modification is found at serine 131. Tyrosine 140 bears the Phosphotyrosine mark. Disordered regions lie at residues 140 to 536 (YESG…EDEE) and 560 to 584 (SNLS…SPDD). Phosphoserine occurs at positions 142, 144, and 166. The span at 157-168 (GNRSSTRSSSTK) shows a compositional bias: low complexity. Glycyl lysine isopeptide (Lys-Gly) (interchain with G-Cter in SUMO2) cross-links involve residues lysine 170 and lysine 177. Basic residues-rich tracts occupy residues 179-202 (STKK…KKSK) and 214-230 (RSKS…SKRS). 7 positions are modified to phosphoserine: serine 239, serine 241, serine 257, serine 277, serine 283, serine 292, and serine 294. Positions 247-270 (RSQEKVGKARSPVDDKAKVEDKSK) are enriched in basic and acidic residues. Positions 302-315 (SKDRRSRSKERKSK) are enriched in basic residues. Residues 316-325 (RPEADKEKKP) show a composition bias toward basic and acidic residues. Serine 328, serine 354, serine 356, serine 366, and serine 368 each carry phosphoserine. The span at 342 to 367 (PSRRPGRSPKRRSLSPKQRDKSRRSR) shows a compositional bias: basic residues. Threonine 385 carries the post-translational modification Phosphothreonine. Serine 387 bears the Phosphoserine mark. 2 stretches are compositionally biased toward basic and acidic residues: residues 395 to 408 (RSLE…ERRR) and 415 to 429 (RPRD…RSKD). 3 positions are modified to phosphoserine: serine 427, serine 431, and serine 437. Residues 438 to 498 (PARRRASRSP…RGGRRRRSRS (61 aa)) show a composition bias toward basic residues. Residues serine 519, serine 520, serine 521, serine 566, serine 570, serine 577, serine 579, and serine 581 each carry the phosphoserine modification. A compositionally biased stretch (acidic residues) spans 519-536 (SSSDDNLEDFDVEEEDEE). Residues 563 to 582 (SVPSEPSSPQSSTRSRSPSP) show a composition bias toward low complexity. Residues lysine 594 and lysine 660 each participate in a glycyl lysine isopeptide (Lys-Gly) (interchain with G-Cter in SUMO2) cross-link. The 317-residue stretch at 688–1004 (YNVYGYTGQG…INQALQHAFI (317 aa)) folds into the Protein kinase domain. ATP contacts are provided by residues 694–702 (TGQGVFSNV) and lysine 718. Lysine 718 carries the N6-acetyllysine modification. Aspartate 816 serves as the catalytic Proton acceptor. A Phosphotyrosine modification is found at tyrosine 850. Serine 853 is modified (phosphoserine).

The protein belongs to the protein kinase superfamily. CMGC Ser/Thr protein kinase family. In terms of assembly, interacts with CLK1 C-terminus. Associates with the U5 snRNP and NCOR1 deacetylase complexes. Identified in the spliceosome C complex. In terms of processing, phosphorylated by CLK1. Autophosphorylated; phosphorylation inhibits interaction with its targets, such as PRPF6 or SMARCA4.

It localises to the nucleus. Its subcellular location is the chromosome. The protein resides in the centromere. It is found in the kinetochore. The catalysed reaction is L-seryl-[protein] + ATP = O-phospho-L-seryl-[protein] + ADP + H(+). The enzyme catalyses L-threonyl-[protein] + ATP = O-phospho-L-threonyl-[protein] + ADP + H(+). Functionally, serine/threonine kinase involved in spliceosomal assembly as well as mitosis and signaling regulation. Connects chromatin mediated regulation of transcription and pre-mRNA splicing. During spliceosomal assembly, interacts with and phosphorylates PRPF6 and PRPF31, components of the U4/U6-U5 tri-small nuclear ribonucleoprotein (snRNP), to facilitate the formation of the spliceosome B complex. Plays a role in regulating transcription and the spindle assembly checkpoint (SAC). Associates with U5 snRNP and NCOR1 deacetylase complexes which may allow a coordination of pre-mRNA splicing with chromatin remodeling events involved in transcriptional regulation. Associates and probably phosphorylates SMARCA4 and NCOR1. Phosphorylates SRSF1. Associates with kinetochores during mitosis and is necessary for recruitment and maintenance of the checkpoint proteins such as MAD1L1 and MAD12L1 at the kinetochores. Phosphorylates and regulates the activity of the transcription factors such as ELK1 and KLF13. Phosphorylates nuclear YAP1 and WWTR1/TAZ which induces nuclear exclusion and regulates Hippo signaling pathway, involved in tissue growth control. This Bos taurus (Bovine) protein is Serine/threonine-protein kinase PRP4 homolog (PRP4K).